We begin with the raw amino-acid sequence, 169 residues long: Large ribosomal subunit protein uL10 (169 aa).

The protein belongs to the universal ribosomal protein uL10 family. As to quaternary structure, part of the ribosomal stalk of the 50S ribosomal subunit. The N-terminus interacts with L11 and the large rRNA to form the base of the stalk. The C-terminus forms an elongated spine to which L12 dimers bind in a sequential fashion forming a multimeric L10(L12)X complex.

In terms of biological role, forms part of the ribosomal stalk, playing a central role in the interaction of the ribosome with GTP-bound translation factors. The chain is Large ribosomal subunit protein uL10 from Rickettsia massiliae (strain Mtu5).